The primary structure comprises 520 residues: Autophagy-related protein 22 (520 aa).

Residue asparagine 11 is glycosylated (N-linked (GlcNAc...) asparagine). Transmembrane regions (helical) follow at residues isoleucine 32–threonine 52, phenylalanine 104–isoleucine 124, asparagine 133–tyrosine 153, and tyrosine 158–glycine 178. Asparagine 193 carries an N-linked (GlcNAc...) asparagine glycan. The next 2 membrane-spanning stretches (helical) occupy residues glycine 214–lysine 234 and valine 244–leucine 264. A glycan (N-linked (GlcNAc...) asparagine) is linked at asparagine 280. 6 consecutive transmembrane segments (helical) span residues valine 316–threonine 336, leucine 350–isoleucine 370, leucine 386–phenylalanine 406, phenylalanine 415–serine 435, isoleucine 454–threonine 474, and serine 483–valine 503.

The protein belongs to the ATG22 family.

It is found in the vacuole membrane. In terms of biological role, vacuolar effluxer which mediate the efflux of amino acids resulting from autophagic degradation. The release of autophagic amino acids allows the maintenance of protein synthesis and viability during nitrogen starvation. This chain is Autophagy-related protein 22 (ATG22), found in Vanderwaltozyma polyspora (strain ATCC 22028 / DSM 70294 / BCRC 21397 / CBS 2163 / NBRC 10782 / NRRL Y-8283 / UCD 57-17) (Kluyveromyces polysporus).